The primary structure comprises 200 residues: Lipopolysaccharide core heptose(II)-phosphate phosphatase (200 aa).

Residues 1 to 25 form the signal peptide; the sequence is MLAFCRSSLKSKKYFIILLALAAIA.

It belongs to the phosphoglycerate mutase family. Ais subfamily.

Its subcellular location is the periplasm. It functions in the pathway bacterial outer membrane biogenesis; lipopolysaccharide metabolism. In terms of biological role, catalyzes the dephosphorylation of heptose(II) of the outer membrane lipopolysaccharide core. This chain is Lipopolysaccharide core heptose(II)-phosphate phosphatase, found in Escherichia coli O157:H7.